Reading from the N-terminus, the 160-residue chain is Putative 4-hydroxy-4-methyl-2-oxoglutarate aldolase (160 aa).

Substrate is bound by residues 78 to 81 (GDVI) and R100. An a divalent metal cation-binding site is contributed by D101.

The protein belongs to the class II aldolase/RraA-like family. As to quaternary structure, homotrimer. Requires a divalent metal cation as cofactor.

It catalyses the reaction 4-hydroxy-4-methyl-2-oxoglutarate = 2 pyruvate. It carries out the reaction oxaloacetate + H(+) = pyruvate + CO2. Functionally, catalyzes the aldol cleavage of 4-hydroxy-4-methyl-2-oxoglutarate (HMG) into 2 molecules of pyruvate. Also contains a secondary oxaloacetate (OAA) decarboxylase activity due to the common pyruvate enolate transition state formed following C-C bond cleavage in the retro-aldol and decarboxylation reactions. The chain is Putative 4-hydroxy-4-methyl-2-oxoglutarate aldolase from Mycolicibacterium paratuberculosis (strain ATCC BAA-968 / K-10) (Mycobacterium paratuberculosis).